The following is a 1184-amino-acid chain: DNA-directed RNA polymerase subunit beta (1184 aa).

The tract at residues 1160-1184 is disordered; it reads DDDFTNQNDAFNIVQPENAATEKTE.

It belongs to the RNA polymerase beta chain family. The RNAP catalytic core consists of 2 alpha, 1 beta, 1 beta' and 1 omega subunit. When a sigma factor is associated with the core the holoenzyme is formed, which can initiate transcription.

It catalyses the reaction RNA(n) + a ribonucleoside 5'-triphosphate = RNA(n+1) + diphosphate. In terms of biological role, DNA-dependent RNA polymerase catalyzes the transcription of DNA into RNA using the four ribonucleoside triphosphates as substrates. This is DNA-directed RNA polymerase subunit beta from Listeria innocua serovar 6a (strain ATCC BAA-680 / CLIP 11262).